Reading from the N-terminus, the 483-residue chain is UDP-N-acetylmuramoyl-L-alanyl-D-glutamate--2,6-diaminopimelate ligase (483 aa).

UDP-N-acetyl-alpha-D-muramoyl-L-alanyl-D-glutamate is bound at residue Ser-30. 109-115 (GTNGKTT) serves as a coordination point for ATP. Residues 151-152 (TT), Ser-178, and Arg-186 each bind UDP-N-acetyl-alpha-D-muramoyl-L-alanyl-D-glutamate. N6-carboxylysine is present on Lys-218. Meso-2,6-diaminopimelate is bound by residues Arg-380, 403 to 406 (DNPR), Gly-453, and Glu-457. A Meso-diaminopimelate recognition motif motif is present at residues 403–406 (DNPR).

It belongs to the MurCDEF family. MurE subfamily. Mg(2+) serves as cofactor. In terms of processing, carboxylation is probably crucial for Mg(2+) binding and, consequently, for the gamma-phosphate positioning of ATP.

Its subcellular location is the cytoplasm. It carries out the reaction UDP-N-acetyl-alpha-D-muramoyl-L-alanyl-D-glutamate + meso-2,6-diaminopimelate + ATP = UDP-N-acetyl-alpha-D-muramoyl-L-alanyl-gamma-D-glutamyl-meso-2,6-diaminopimelate + ADP + phosphate + H(+). Its pathway is cell wall biogenesis; peptidoglycan biosynthesis. Catalyzes the addition of meso-diaminopimelic acid to the nucleotide precursor UDP-N-acetylmuramoyl-L-alanyl-D-glutamate (UMAG) in the biosynthesis of bacterial cell-wall peptidoglycan. This is UDP-N-acetylmuramoyl-L-alanyl-D-glutamate--2,6-diaminopimelate ligase from Chlamydia muridarum (strain MoPn / Nigg).